The primary structure comprises 342 residues: Phosphate acyltransferase (342 aa).

Belongs to the PlsX family. As to quaternary structure, homodimer. Probably interacts with PlsY.

The protein localises to the cytoplasm. It carries out the reaction a fatty acyl-[ACP] + phosphate = an acyl phosphate + holo-[ACP]. It participates in lipid metabolism; phospholipid metabolism. In terms of biological role, catalyzes the reversible formation of acyl-phosphate (acyl-PO(4)) from acyl-[acyl-carrier-protein] (acyl-ACP). This enzyme utilizes acyl-ACP as fatty acyl donor, but not acyl-CoA. This chain is Phosphate acyltransferase, found in Legionella pneumophila (strain Paris).